A 244-amino-acid polypeptide reads, in one-letter code: Probable transcriptional regulatory protein Xfasm12_1059 (244 aa).

Belongs to the TACO1 family.

It localises to the cytoplasm. In Xylella fastidiosa (strain M12), this protein is Probable transcriptional regulatory protein Xfasm12_1059.